The chain runs to 648 residues: Sodium/nucleoside cotransporter 1 (648 aa).

The Cytoplasmic portion of the chain corresponds to 1-80 (MADNTQRQRE…ARSFCREHRQ (80 aa)). Residues 81 to 104 (LFGWICKGLLSTACLGFLMVACLL) form a helical membrane-spanning segment. The Extracellular segment spans residues 105–109 (DLQRA). The chain crosses the membrane as a helical span at residues 110 to 128 (LALLIITCVVLVFLAYDLL). Topologically, residues 129 to 147 (KRLLGSKLRRCVKFQGHSC) are cytoplasmic. A helical transmembrane segment spans residues 148–167 (LSLWLKRGLALAAGVGLILW). Residues 168-178 (LSLDTAQRPEQ) are Extracellular-facing. The helical transmembrane segment at 179-195 (LVSFAGICVFLVLLFAG) threads the bilayer. Residues 196–201 (SKHHRA) lie on the Cytoplasmic side of the membrane. The helical transmembrane segment at 202-222 (VSWRAVSWGLGLQFVLGLFVI) threads the bilayer. The Extracellular portion of the chain corresponds to 223-261 (RTEPGFIAFQWLGDQIQVFLSYTEAGSSFVFGEALVKDV). A helical transmembrane segment spans residues 262 to 283 (FAFQVLPIIIFFSCVMSVLYYL). The Cytoplasmic segment spans residues 284–294 (GLMQWVILKIA). Residues 295-318 (WLMQVTMGTSATETLSVAGNIFVS) traverse the membrane as a helical segment. The Extracellular portion of the chain corresponds to 319–337 (QTEAPLLIRPYLADMTLSE). The helical transmembrane segment at 338–360 (VHVVMTGGYATIAGSLLGAYISF) threads the bilayer. Topologically, residues 361-366 (GIDAAS) are cytoplasmic. Residues 367–386 (LIAASVMAAPCALALSKLVY) traverse the membrane as a helical segment. Topologically, residues 387 to 423 (PEVEESKFRSENGVKLTYGDAQNLLEAASAGAAISVK) are extracellular. The chain crosses the membrane as a helical span at residues 424-446 (VVANIAANLIAFLAVLAFVNAAL). At 447–457 (SWLGDMVDIQG) the chain is on the cytoplasmic side. The helical transmembrane segment at 458 to 479 (LSFQLICSYVLRPVAFLMGVAW) threads the bilayer. Residues 480–534 (EDCPVVAELLGIKFFLNEFVAYQELSQYKQRRLAGAEEWLGDKKQWISVRAEILT) are Extracellular-facing. The helical transmembrane segment at 535 to 558 (TYALCGFANFSSIGIMLGGLTSLV) threads the bilayer. Residues 559 to 569 (PQRRSDFSQIV) are Cytoplasmic-facing. Residues 570–592 (LRALITGAFVSLLNACVAGILYV) form a helical membrane-spanning segment. Over 593–648 (PRGVEVDCVSLLNQTVSSSSFEVYLCCRQVFQSTSSEFSQVALDNCCRFYNHTVCT) the chain is Extracellular. 2 N-linked (GlcNAc...) asparagine glycosylation sites follow: Asn605 and Asn643.

This sequence belongs to the concentrative nucleoside transporter (CNT) (TC 2.A.41) family. Post-translationally, N-glycosylated. N-glycosylation is required for localization to the plasma membrane and the transporter activity. In terms of tissue distribution, expressed predominantly in the brush-border membranes of the polarized epithelial cells of jejunum and renal cortical tubules and in the bile canalicular membranes of liver parenchymal cells.

The protein localises to the cell membrane. It is found in the apical cell membrane. It carries out the reaction uridine(out) + Na(+)(out) = uridine(in) + Na(+)(in). The enzyme catalyses thymidine(out) + Na(+)(out) = thymidine(in) + Na(+)(in). The catalysed reaction is cytidine(out) + Na(+)(out) = cytidine(in) + Na(+)(in). It catalyses the reaction adenosine(out) + Na(+)(out) = adenosine(in) + Na(+)(in). With respect to regulation, due to its high apparent affinity but slow transport, adenosine could act as a negative regulator of pyrimidine transport under some conditions. Its function is as follows. Sodium and pyrimidine nucleoside symporter of the plasma membrane that imports uridine, thymidine and cytidine into cells by coupling their transport to the transmembrane sodium electrochemical gradient. Also transports adenosine, an atypical substrate transported with high apparent affinity, but low maximum velocity. Therefore, exhibits the transport characteristics of the nucleoside transport system cit or N2 subtype (N2/cit). Involved in renal nucleoside (re)absorption. The sequence is that of Sodium/nucleoside cotransporter 1 from Rattus norvegicus (Rat).